The following is a 320-amino-acid chain: Esterase LipI (320 aa).

Residues serine 165, aspartate 261, and histidine 291 contribute to the active site.

Belongs to the 'GDXG' lipolytic enzyme family.

The enzyme catalyses a fatty acid ester + H2O = an aliphatic alcohol + a fatty acid + H(+). It carries out the reaction a butanoate ester + H2O = an aliphatic alcohol + butanoate + H(+). It catalyses the reaction an octanoate ester + H2O = an aliphatic alcohol + octanoate + H(+). The catalysed reaction is decanoate ester + H2O = decanoate + an aliphatic alcohol + H(+). The enzyme catalyses an acetyl ester + H2O = an aliphatic alcohol + acetate + H(+). It carries out the reaction a dodecanoate ester + H2O = an aliphatic alcohol + dodecanoate + H(+). Inhibited by ionic detergents SDS (anions) and CTAB (cationic). Strongly inhibited by Zn(2+). Esterase that can hydrolyze short-chain esters with the carbon chain containing 2 to 12 carbon atoms. In vitro, pNP-butyrate is the preferred substrate. This chain is Esterase LipI, found in Mycobacterium tuberculosis (strain ATCC 25618 / H37Rv).